The chain runs to 386 residues: N-acetylneuraminate epimerase (386 aa).

The first 29 residues, 1–29, serve as a signal peptide directing secretion; the sequence is MGMQMKNFKKMMTLMALCLSVAITTSGYA. 7 Kelch repeats span residues 51–95, 97–149, 151–186, 187–232, 235–284, 306–355, and 357–386; these read VIYV…VFLN, ELYV…VKLN, TMVL…KVIY, NYFN…VMEN, LMLI…LAGA, QNYT…SYGD, and VFLI…LLIK. The Proton acceptor role is filled by Glu241.

It belongs to the NanM family. As to quaternary structure, homodimer.

It localises to the periplasm. The enzyme catalyses N-acetyl-alpha-neuraminate = N-acetyl-beta-neuraminate. Functionally, converts alpha-N-acetylneuranimic acid (Neu5Ac) to the beta-anomer, accelerating the equilibrium between the alpha- and beta-anomers. Probably facilitates sialidase-negative bacteria to compete successfully for limited amounts of extracellular Neu5Ac, which is likely taken up in the beta-anomer. In addition, the rapid removal of sialic acid from solution might be advantageous to the bacterium to damp down host responses. The sequence is that of N-acetylneuraminate epimerase from Salmonella choleraesuis (strain SC-B67).